The primary structure comprises 148 residues: Large ribosomal subunit protein bL9 (148 aa).

This sequence belongs to the bacterial ribosomal protein bL9 family.

Its function is as follows. Binds to the 23S rRNA. This chain is Large ribosomal subunit protein bL9, found in Clostridium perfringens (strain ATCC 13124 / DSM 756 / JCM 1290 / NCIMB 6125 / NCTC 8237 / Type A).